A 267-amino-acid chain; its full sequence is Very long chain fatty acid elongase 6 (267 aa).

Residue Asn2 is glycosylated (N-linked (GlcNAc...) asparagine). The next 7 membrane-spanning stretches (helical) occupy residues 34–51 (FLFS…RHLM), 70–90 (LAVF…YILM), 111–131 (FWAY…IFII), 136–156 (KLIF…WYSY), 159–179 (MVAG…VMYS), 197–217 (FITL…YLVF), and 234–254 (IFWS…FFFE).

Belongs to the ELO family. ELOVL6 subfamily. Post-translationally, N-Glycosylated. In terms of tissue distribution, expressed in liver and barely in brain.

The protein localises to the endoplasmic reticulum membrane. It catalyses the reaction a very-long-chain acyl-CoA + malonyl-CoA + H(+) = a very-long-chain 3-oxoacyl-CoA + CO2 + CoA. It carries out the reaction hexadecanoyl-CoA + malonyl-CoA + H(+) = 3-oxooctadecanoyl-CoA + CO2 + CoA. The enzyme catalyses (9Z)-hexadecenoyl-CoA + malonyl-CoA + H(+) = 3-oxo-(11Z)-octadecenoyl-CoA + CO2 + CoA. The catalysed reaction is dodecanoyl-CoA + malonyl-CoA + H(+) = 3-oxotetradecanoyl-CoA + CO2 + CoA. It catalyses the reaction tetradecanoyl-CoA + malonyl-CoA + H(+) = 3-oxohexadecanoyl-CoA + CO2 + CoA. It carries out the reaction (9Z)-octadecenoyl-CoA + malonyl-CoA + H(+) = 3-oxo-(11Z)-eicosenoyl-CoA + CO2 + CoA. The enzyme catalyses (9Z,12Z)-octadecadienoyl-CoA + malonyl-CoA + H(+) = (11Z,14Z)-3-oxoicosa-11,14-dienoyl-CoA + CO2 + CoA. The catalysed reaction is (9Z,12Z,15Z)-octadecatrienoyl-CoA + malonyl-CoA + H(+) = (11Z,14Z,17Z)-3-oxoeicosatrienoyl-CoA + CO2 + CoA. Its pathway is lipid metabolism; fatty acid biosynthesis. Its activity is regulated as follows. The reaction is stimulated by the presence of HSD17B12, the enzyme catalyzing the second step of the elongation cycle. Its function is as follows. Catalyzes the first and rate-limiting reaction of the four reactions that constitute the long-chain fatty acids elongation cycle. This endoplasmic reticulum-bound enzymatic process allows the addition of 2 carbons to the chain of long- and very long-chain fatty acids (VLCFAs) per cycle. Condensing enzyme that elongates fatty acids with 12, 14 and 16 carbons with higher activity toward C16:0 acyl-CoAs. Catalyzes the synthesis of unsaturated C16 long chain fatty acids and, to a lesser extent, C18:0 and those with low desaturation degree. May participate in the production of saturated and monounsaturated VLCFAs of different chain lengths that are involved in multiple biological processes as precursors of membrane lipids and lipid mediators. This chain is Very long chain fatty acid elongase 6, found in Rattus norvegicus (Rat).